The following is a 342-amino-acid chain: D-erythrose-4-phosphate dehydrogenase (342 aa).

12–13 (RI) contacts NAD(+). Substrate-binding positions include 154–156 (SCT), R200, 213–214 (TK), and R236. The Nucleophile role is filled by C155. N318 serves as a coordination point for NAD(+).

Belongs to the glyceraldehyde-3-phosphate dehydrogenase family. Epd subfamily. As to quaternary structure, homotetramer.

It localises to the cytoplasm. It catalyses the reaction D-erythrose 4-phosphate + NAD(+) + H2O = 4-phospho-D-erythronate + NADH + 2 H(+). It participates in cofactor biosynthesis; pyridoxine 5'-phosphate biosynthesis; pyridoxine 5'-phosphate from D-erythrose 4-phosphate: step 1/5. Functionally, catalyzes the NAD-dependent conversion of D-erythrose 4-phosphate to 4-phosphoerythronate. This Klebsiella pneumoniae (strain 342) protein is D-erythrose-4-phosphate dehydrogenase.